Here is a 339-residue protein sequence, read N- to C-terminus: MSSEMLPAFIETSNVDKKQGINEDQEESQKPRLGEGCEPISKRQMKKLIKQKQWEEQRELRKQKRKEKRKRKKLERQCQMEPNSDGHDRKRVRRDVVHSTLRLIIDCSFDHLMVLKDIKKLHKQIQRCYAENRRALHPVQFYLTSHGGQLKKNMDENDKGWVNWKDIHIKPEHYSELIKKEDLIYLTSDSPNILKELDESKAYVIGGLVDHNHHKGLTYKQASDYGINHAQLPLGNFVKMNSRKVLAVNHVFEIILEYLETRDWQEAFFTILPQRKGAVPTDKACESASHDNQSVRMEEGGSDSDSSEEEYSRNELDSPHEEKQDKENHTESTVNSLPH.

Disordered stretches follow at residues 1 to 90 (MSSE…HDRK) and 282 to 339 (DKAC…SLPH). Basic and acidic residues predominate over residues 14–35 (NVDKKQGINEDQEESQKPRLGE). Residues 52–81 (KQWEEQRELRKQKRKEKRKRKKLERQCQME) are a coiled coil. Over residues 61–74 (RKQKRKEKRKRKKL) the composition is skewed to basic residues. An SAM-dependent MTase TRM10-type domain is found at 89–279 (RKRVRRDVVH…TILPQRKGAV (191 aa)). The span at 300-309 (GGSDSDSSEE) shows a compositional bias: acidic residues. A compositionally biased stretch (basic and acidic residues) spans 310-330 (EYSRNELDSPHEEKQDKENHT). At serine 336 the chain carries Phosphoserine.

The protein belongs to the class IV-like SAM-binding methyltransferase superfamily. TRM10 family. As to quaternary structure, interacts with tRNA. In terms of tissue distribution, expressed in embryonic and fetal brain. It is expressed throughout the dorsal telencephalon at 8 and 11 weeks of gestation, with highest expression in ventricular zone and marginal zone. Detected in cerebellar cortex and nuclei, but not in dorsal telencephalon, at later stages.

It is found in the nucleus. The protein resides in the nucleolus. It carries out the reaction guanosine(9) in tRNA + S-adenosyl-L-methionine = N(1)-methylguanosine(9) in tRNA + S-adenosyl-L-homocysteine + H(+). Functionally, S-adenosyl-L-methionine-dependent guanine N(1)-methyltransferase that catalyzes the formation of N(1)-methylguanine at position 9 (m1G9) in tRNAs. Probably not able to catalyze formation of N(1)-methyladenine at position 9 (m1A9) in tRNAs. This Homo sapiens (Human) protein is tRNA methyltransferase 10 homolog A (TRMT10A).